Here is a 569-residue protein sequence, read N- to C-terminus: Ribonuclease J (569 aa).

H81, H83, D85, H86, H150, and D172 together coordinate Zn(2+). H373–H377 is a binding site for substrate. H399 is a binding site for Zn(2+).

The protein belongs to the metallo-beta-lactamase superfamily. RNA-metabolizing metallo-beta-lactamase-like family. Bacterial RNase J subfamily. In terms of assembly, homodimer, may be a subunit of the RNA degradosome. It depends on Zn(2+) as a cofactor.

The protein localises to the cytoplasm. Functionally, an RNase that has 5'-3' exonuclease and possibly endoonuclease activity. Involved in maturation of rRNA and in some organisms also mRNA maturation and/or decay. In Mycoplasma genitalium (strain ATCC 33530 / DSM 19775 / NCTC 10195 / G37) (Mycoplasmoides genitalium), this protein is Ribonuclease J.